The sequence spans 348 residues: Oxidase ucsJ (348 aa).

Belongs to the avfA family.

It functions in the pathway mycotoxin biosynthesis. Functionally, oxidase; part of the gene cluster that mediates the biosynthesis of UCS1025A, a member of the pyrrolizidinone family that acts as a strong telomerase inhibitor and displays potent antibacterial and antitumor properties. These compounds share a hemiaminal-containing pyrrolizidinone core fused with a gamma-lactone, giving a furopyrrolizidine that is connected to a decalin fragment. The polyketide synthase module (PKS) of the PKS-NRPS ucsA is responsible for the synthesis of the polyketide backbone via the condensation of an acetyl-CoA starter unit with 6 malonyl-CoA units. The downstream nonribosomal peptide synthetase (NRPS) module then amidates the carboxyl end of the polyketide with a 2S,3S-methylproline derived from L-isoleucine by the 2-oxoglutarate-dependent dioxygenase ucsF which converts L-isoleucine to (4S,5S)-4-methylpyrroline-5-carboxylate that is further converted to 2S,3S-methylproline by the pyrroline-5-carboxylate reductase ucsG. Reductive release of the completed aminoacyl polyketide from the assembly line can form the 3-pyrrolin-2-one structure via an intramolecular Knoevenagel reaction. Because ucsA lacks a designated enoylreductase (ER) domain, the required activity is provided the enoyl reductase ucsL. This keto acyclic precursor is the substrate of the Diels-Alderase ucsH, that catalyzes the Diels-Alder cycloaddition. Oxidation of the 3S-methyl group to a carboxylate by the cytochrome P450 monooxygenase ucsK allows an oxa-Michael cyclization that might involve the reductase/dehydrogenase ucsI and which furnishes the furopyrrolizidine. The oxidase ucsJ likely plays a critical role in stereoselective reduction of the C5-C6 double bond to afford the required R-configured carboxylate group. Further enolization and oxidation at C5 by an unidentified enzyme affords the last intermediate that can undergo oxa-Michael cyclization to yield UCS1025A. This is Oxidase ucsJ from Acremonium sp.